The sequence spans 1169 residues: Integrin alpha-X (1169 aa).

Positions 1-19 (MSCTWIAFLLLLGFVSCLG) are cleaved as a signal peptide. The Extracellular portion of the chain corresponds to 20–1116 (FNLDAEKLTH…EMYKVHNPVP (1097 aa)). FG-GAP repeat units lie at residues 23-78 (DAEK…NCEP) and 79-138 (ISLQ…QSQN). Cys69 and Cys76 are joined by a disulfide. Asn89 carries an N-linked (GlcNAc...) asparagine glycan. Disulfide bonds link Cys108/Cys126 and Cys116/Cys146. Residues 152 to 330 (DIVFLIDGSG…DALKDIENQL (179 aa)) form the VWFA domain. Mg(2+) contacts are provided by Asp158, Ser160, Ser162, and Asp260. Asn267 carries N-linked (GlcNAc...) asparagine glycosylation. FG-GAP repeat units lie at residues 341–392 (ETPS…PTFI), 393–444 (NMSQ…SRHW), 445–505 (RPKS…GSRW), 508–566 (GTTL…QDIA), and 571–631 (QRIS…FTPA). Asn393 carries an N-linked (GlcNAc...) asparagine glycan. Residues Asp467, Asp469, Asp471, and Asp475 each coordinate Ca(2+). Cys496 and Cys507 form a disulfide bridge. Ca(2+) contacts are provided by Asp531, Asn533, Asp535, Asp539, Asp594, Asp598, and Asp602. 2 cysteine pairs are disulfide-bonded: Cys640/Cys721 and Cys656/Cys711. N-linked (GlcNAc...) asparagine glycosylation is present at Asn734. Cystine bridges form between Cys770–Cys776 and Cys858–Cys873. A glycan (N-linked (GlcNAc...) asparagine) is linked at Asn949. Intrachain disulfides connect Cys1007-Cys1031 and Cys1036-Cys1041. Asn1059 and Asn1084 each carry an N-linked (GlcNAc...) asparagine glycan. Residues 1117-1137 (LIVGSSVGGLLLLAIITAILY) traverse the membrane as a helical segment. Residues 1138 to 1169 (KAGFFKRQYKEMLEEANGQFVSDGTPTPQVAQ) are Cytoplasmic-facing. A GFFKR motif motif is present at residues 1140–1144 (GFFKR).

The protein belongs to the integrin alpha chain family. As to quaternary structure, heterodimer of an alpha and a beta subunit. Alpha-X associates with beta-2.

It is found in the membrane. In terms of biological role, integrin alpha-X/beta-2 is a receptor for fibrinogen. It recognizes the sequence G-P-R in fibrinogen. It mediates cell-cell interaction during inflammatory responses. It is especially important in monocyte adhesion and chemotaxis. The sequence is that of Integrin alpha-X (Itgax) from Mus musculus (Mouse).